The sequence spans 126 residues: Large ribosomal subunit protein bL17 (126 aa).

The protein belongs to the bacterial ribosomal protein bL17 family. Part of the 50S ribosomal subunit. Contacts protein L32.

This is Large ribosomal subunit protein bL17 from Rickettsia felis (strain ATCC VR-1525 / URRWXCal2) (Rickettsia azadi).